The chain runs to 461 residues: Probable tubulin polyglutamylase TTLL9 (461 aa).

Positions 1-10 are enriched in polar residues; the sequence is MSRQKSQTSK. The tract at residues 1 to 20 is disordered; the sequence is MSRQKSQTSKGHGASKGKER. Residues 22-402 form the TTL domain; the sequence is QRTLIRFKTT…EARLTGKEKR (381 aa). ATP is bound by residues Lys-149 and 155-156; that span reads QG. An a protein-binding site is contributed by Gln-155. The segment covering 186–197 has biased composition (polar residues); the sequence is QATRANVNPSGS. The tract at residues 186 to 208 is disordered; sequence QATRANVNPSGSHDTRSSDDQKD. Residues 198–208 are compositionally biased toward basic and acidic residues; that stretch reads HDTRSSDDQKD. ATP-binding positions include 218–221 and 231–233; these read QRYV and KFD. Arg-257 provides a ligand contact to L-glutamate. Position 276 to 277 (276 to 277) interacts with ATP; that stretch reads TN. Position 294 (Lys-294) interacts with L-glutamate. The Mg(2+) site is built by Asp-348, Glu-361, and Asn-363. Residue Lys-379 participates in L-glutamate binding.

Belongs to the tubulin--tyrosine ligase family. Requires Mg(2+) as cofactor.

Its subcellular location is the cytoplasm. It is found in the cytoskeleton. The protein localises to the cilium basal body. The protein resides in the flagellum axoneme. The enzyme catalyses (L-glutamyl)(n)-gamma-L-glutamyl-L-glutamyl-[protein] + L-glutamate + ATP = (L-glutamyl)(n+1)-gamma-L-glutamyl-L-glutamyl-[protein] + ADP + phosphate + H(+). Functionally, probable tubulin polyglutamylase that generates side chains of glutamate on the gamma-carboxyl group of specific glutamate residues within the C-terminal tail of target proteins. Similar to TTLL1, may acquire enzymatic activity only in complex with other proteins as it is most likely lacking domains important for autonomous activity. Mediates tubulin polyglutamylation which induces establishment of microtubule heterogeneity in sperm flagella, thereby playing a role in normal motile flagella axoneme structure and sperm flagella beating pattern. The sequence is that of Probable tubulin polyglutamylase TTLL9 (Ttll9) from Rattus norvegicus (Rat).